The primary structure comprises 39 residues: Potassium channel toxin alpha-KTx 2.1 (39 aa).

Intrachain disulfides connect Cys-7/Cys-29, Cys-13/Cys-34, and Cys-17/Cys-36. The tract at residues 26 to 34 (GAKCMNGKC) is interaction with Ca(2+)-activated K(+) channels. Asn-39 is modified (asparagine amide).

Belongs to the short scorpion toxin superfamily. Potassium channel inhibitor family. Alpha-KTx 02 subfamily. Expressed by the venom gland.

Its subcellular location is the secreted. Blocks voltage-gated potassium channels (mKv1.1/KCNA1 (Kd&gt;25 nM), rKv1.2/KCNA2 (Kd=2 nM), mKv1.3/KCNA3 (Kd=1 nM), hKv1.5/KCNA5 (Kd&gt;25 nM) and mKv3.1/KCNC1 (Kd&gt;25 nM)) and calcium-activated potassium channels (KCa1.1/KCNMA1 and KCa3.1/KCNN4, Kd&gt;25 nM). The chain is Potassium channel toxin alpha-KTx 2.1 from Centruroides noxius (Mexican scorpion).